A 316-amino-acid polypeptide reads, in one-letter code: Ribosomal protein L11 methyltransferase (316 aa).

Thr-159, Gly-179, Asp-201, and Asn-243 together coordinate S-adenosyl-L-methionine.

Belongs to the methyltransferase superfamily. PrmA family.

It localises to the cytoplasm. The enzyme catalyses L-lysyl-[protein] + 3 S-adenosyl-L-methionine = N(6),N(6),N(6)-trimethyl-L-lysyl-[protein] + 3 S-adenosyl-L-homocysteine + 3 H(+). In terms of biological role, methylates ribosomal protein L11. In Gloeobacter violaceus (strain ATCC 29082 / PCC 7421), this protein is Ribosomal protein L11 methyltransferase.